We begin with the raw amino-acid sequence, 388 residues long: Protein-glutamate methylesterase/protein-glutamine glutaminase 1 (388 aa).

The Response regulatory domain occupies 4–121 (QVLVVDDSSF…ATNKDEAIRL (118 aa)). At Asp-55 the chain carries 4-aspartylphosphate. Positions 149–190 (SARAGLSSTSPTLGSSTLGRSPASGLASSASRNSPTVSTPAS) are disordered. Residues 153 to 169 (GLSSTSPTLGSSTLGRS) are compositionally biased toward low complexity. Residues 174-189 (LASSASRNSPTVSTPA) show a composition bias toward polar residues. The region spanning 188-388 (PASAIRASGK…EAILKESGRG (201 aa)) is the CheB-type methylesterase domain. Active-site residues include Ser-207, His-234, and Asp-330.

The protein belongs to the CheB family. Post-translationally, phosphorylated by CheA. Phosphorylation of the N-terminal regulatory domain activates the methylesterase activity.

The protein resides in the cytoplasm. The enzyme catalyses [protein]-L-glutamate 5-O-methyl ester + H2O = L-glutamyl-[protein] + methanol + H(+). The catalysed reaction is L-glutaminyl-[protein] + H2O = L-glutamyl-[protein] + NH4(+). Involved in chemotaxis. Part of a chemotaxis signal transduction system that modulates chemotaxis in response to various stimuli. Catalyzes the demethylation of specific methylglutamate residues introduced into the chemoreceptors (methyl-accepting chemotaxis proteins or MCP) by CheR. Also mediates the irreversible deamidation of specific glutamine residues to glutamic acid. The polypeptide is Protein-glutamate methylesterase/protein-glutamine glutaminase 1 (Shewanella denitrificans (strain OS217 / ATCC BAA-1090 / DSM 15013)).